A 344-amino-acid polypeptide reads, in one-letter code: tRNA N6-adenosine threonylcarbamoyltransferase (344 aa).

H111 and H115 together coordinate Fe cation. Substrate-binding positions include 134-138, D167, G180, and N273; that span reads LVSGG. D301 is a binding site for Fe cation.

This sequence belongs to the KAE1 / TsaD family. Requires Fe(2+) as cofactor.

It is found in the cytoplasm. The catalysed reaction is L-threonylcarbamoyladenylate + adenosine(37) in tRNA = N(6)-L-threonylcarbamoyladenosine(37) in tRNA + AMP + H(+). Required for the formation of a threonylcarbamoyl group on adenosine at position 37 (t(6)A37) in tRNAs that read codons beginning with adenine. Is involved in the transfer of the threonylcarbamoyl moiety of threonylcarbamoyl-AMP (TC-AMP) to the N6 group of A37, together with TsaE and TsaB. TsaD likely plays a direct catalytic role in this reaction. This Cupriavidus taiwanensis (strain DSM 17343 / BCRC 17206 / CCUG 44338 / CIP 107171 / LMG 19424 / R1) (Ralstonia taiwanensis (strain LMG 19424)) protein is tRNA N6-adenosine threonylcarbamoyltransferase.